The following is a 393-amino-acid chain: Diphosphomevalonate decarboxylase (393 aa).

Residues 21–24 (YWGK), arginine 77, 156–161 (SGSACR), and threonine 212 each bind (R)-5-diphosphomevalonate.

Belongs to the diphosphomevalonate decarboxylase family. As to quaternary structure, homodimer.

Its subcellular location is the cytoplasm. The protein localises to the nucleus. It carries out the reaction (R)-5-diphosphomevalonate + ATP = isopentenyl diphosphate + ADP + phosphate + CO2. The protein operates within isoprenoid biosynthesis; isopentenyl diphosphate biosynthesis via mevalonate pathway; isopentenyl diphosphate from (R)-mevalonate: step 3/3. In terms of biological role, diphosphomevalonate decarboxylase; part of the second module of ergosterol biosynthesis pathway that includes the middle steps of the pathway. Mvd1 converts diphosphomevalonate into isopentenyl diphosphate. The second module is carried out in the vacuole and involves the formation of farnesyl diphosphate, which is also an important intermediate in the biosynthesis of ubiquinone, dolichol, heme and prenylated proteins. Activity by the mevalonate kinase erg12 first converts mevalonate into 5-phosphomevalonate. 5-phosphomevalonate is then further converted to 5-diphosphomevalonate by the phosphomevalonate kinase erg8. The diphosphomevalonate decarboxylase mvd1 then produces isopentenyl diphosphate. The isopentenyl-diphosphate delta-isomerase idi1 then catalyzes the 1,3-allylic rearrangement of the homoallylic substrate isopentenyl (IPP) to its highly electrophilic allylic isomer, dimethylallyl diphosphate (DMAPP). Finally the farnesyl diphosphate synthase fps1 catalyzes the sequential condensation of isopentenyl pyrophosphate with dimethylallyl pyrophosphate, and then with the resultant geranylpyrophosphate to the ultimate product farnesyl pyrophosphate. The sequence is that of Diphosphomevalonate decarboxylase (mvd1) from Schizosaccharomyces pombe (strain 972 / ATCC 24843) (Fission yeast).